Reading from the N-terminus, the 284-residue chain is Probable endonuclease 4 (284 aa).

Zn(2+) contacts are provided by His66, His106, Glu142, Asp176, His179, His213, Asp226, His228, and Glu258.

Belongs to the AP endonuclease 2 family. It depends on Zn(2+) as a cofactor.

The catalysed reaction is Endonucleolytic cleavage to 5'-phosphooligonucleotide end-products.. Endonuclease IV plays a role in DNA repair. It cleaves phosphodiester bonds at apurinic or apyrimidinic (AP) sites, generating a 3'-hydroxyl group and a 5'-terminal sugar phosphate. In Natranaerobius thermophilus (strain ATCC BAA-1301 / DSM 18059 / JW/NM-WN-LF), this protein is Probable endonuclease 4.